A 247-amino-acid chain; its full sequence is uncharacterized protein (247 aa).

Helical transmembrane passes span 108–128 (WYIN…FLII), 136–156 (IFSV…NIIC), and 194–214 (GAKL…LFFI).

It is found in the membrane. This is an uncharacterized protein from Caenorhabditis elegans.